Consider the following 193-residue polypeptide: Cysteine and glycine-rich protein 2 (193 aa).

The LIM zinc-binding 1 domain occupies 10–61; sequence CGACGRTVYHAEEVQCDGRSFHRCCFLCMVCRKNLDSTTVAIHDEEIYCKSC. The Nuclear localization signal motif lies at 64–69; sequence KKYGPK. A Glycyl lysine isopeptide (Lys-Gly) (interchain with G-Cter in SUMO2) cross-link involves residue lysine 91. 2 positions are modified to N6-acetyllysine: lysine 112 and lysine 131. Residues 119 to 170 enclose the LIM zinc-binding 2 domain; it reads CSRCGDSVYAAEKIIGAGKPWHKNCFRCAKCGKSLESTTLTEKEGEIYCKGC. At lysine 137 the chain carries N6-acetyllysine; alternate. At lysine 137 the chain carries N6-succinyllysine; alternate. Lysine 161 is subject to N6-acetyllysine.

In terms of assembly, interacts with KAT14. The LIM domain 1 is necessary and sufficient for this interaction. Interacts with GLRX3.

It localises to the nucleus. In terms of biological role, drastically down-regulated in response to PDGF-BB or cell injury, that promote smooth muscle cell proliferation and dedifferentiation. Seems to play a role in the development of the embryonic vascular system. In Bos taurus (Bovine), this protein is Cysteine and glycine-rich protein 2 (CSRP2).